The chain runs to 458 residues: NADH-quinone oxidoreductase subunit N (458 aa).

Transmembrane regions (helical) follow at residues 2 to 22, 30 to 50, 71 to 91, 93 to 113, 118 to 138, 153 to 173, 196 to 216, 235 to 255, 261 to 281, 290 to 310, 319 to 339, 361 to 381, 397 to 417, and 438 to 458; these read LLLL…CFAL, IIYN…FKYS, IILL…ILVG, TLKF…FVAI, FLLL…LAGF, FILG…IYGF, LIIG…SSPL, FTAA…KLII, INYN…AFGA, LMAY…LLHN, LYIL…IMLF, IAAL…LTGF, FTLA…YLKV, and LLLI…IILF.

Belongs to the complex I subunit 2 family. In terms of assembly, NDH-1 is composed of 14 different subunits. Subunits NuoA, H, J, K, L, M, N constitute the membrane sector of the complex.

It is found in the cell inner membrane. The catalysed reaction is a quinone + NADH + 5 H(+)(in) = a quinol + NAD(+) + 4 H(+)(out). Its function is as follows. NDH-1 shuttles electrons from NADH, via FMN and iron-sulfur (Fe-S) centers, to quinones in the respiratory chain. The immediate electron acceptor for the enzyme in this species is believed to be ubiquinone. Couples the redox reaction to proton translocation (for every two electrons transferred, four hydrogen ions are translocated across the cytoplasmic membrane), and thus conserves the redox energy in a proton gradient. The sequence is that of NADH-quinone oxidoreductase subunit N from Rickettsia prowazekii (strain Madrid E).